The following is an 885-amino-acid chain: Alanine--tRNA ligase (885 aa).

4 residues coordinate Zn(2+): H571, H575, C674, and H678.

The protein belongs to the class-II aminoacyl-tRNA synthetase family. Requires Zn(2+) as cofactor.

The protein resides in the cytoplasm. The enzyme catalyses tRNA(Ala) + L-alanine + ATP = L-alanyl-tRNA(Ala) + AMP + diphosphate. Functionally, catalyzes the attachment of alanine to tRNA(Ala) in a two-step reaction: alanine is first activated by ATP to form Ala-AMP and then transferred to the acceptor end of tRNA(Ala). Also edits incorrectly charged Ser-tRNA(Ala) and Gly-tRNA(Ala) via its editing domain. This Clavibacter sepedonicus (Clavibacter michiganensis subsp. sepedonicus) protein is Alanine--tRNA ligase.